Here is a 313-residue protein sequence, read N- to C-terminus: MEIIFYHPFFDAAQWIQGMQQRLPNINIRQWKRGDNKHADYAMVWAPPYEMLANRSGLKGIFILGAGVEAILKQEQQKPGMLPAGVPLMRLEDAGMGLQMQEYAVAMVLHYLRRMDEYKLQQGQRRWKQLEPYDRKDFVVGVLGAGVLGRRVAQTLVEWGFIVRCWSRTPKQINNVVSFHGEDQLGDFLSGSKVLINLLPDTPKTRGILNLSLFSQLKPKSYLINIARGAHLVEHDLLVAIDKGYIVGASLDVFVEEPLPEMHPFWTHPRITVTPHVAAITIPDIAMDTISENIRRIEKGELSTGVVDIKLGY.

Arg-228 is a catalytic residue. His-276 acts as the Proton donor in catalysis.

The protein belongs to the D-isomer specific 2-hydroxyacid dehydrogenase family. GhrA subfamily.

Its subcellular location is the cytoplasm. It catalyses the reaction glycolate + NADP(+) = glyoxylate + NADPH + H(+). The catalysed reaction is (R)-glycerate + NAD(+) = 3-hydroxypyruvate + NADH + H(+). It carries out the reaction (R)-glycerate + NADP(+) = 3-hydroxypyruvate + NADPH + H(+). Functionally, catalyzes the NADPH-dependent reduction of glyoxylate and hydroxypyruvate into glycolate and glycerate, respectively. This chain is Glyoxylate/hydroxypyruvate reductase A, found in Photorhabdus laumondii subsp. laumondii (strain DSM 15139 / CIP 105565 / TT01) (Photorhabdus luminescens subsp. laumondii).